The primary structure comprises 482 residues: Dual specificity protein phosphatase 10 (482 aa).

A Rhodanese domain is found at 168–285; that stretch reads PSQGPVIIDC…FKQNHENLCD (118 aa). The tract at residues 199-215 is interaction with MAP kinases; that stretch reads KISRRRLQQGKITVLDL. Residues 321–464 enclose the Tyrosine-protein phosphatase domain; the sequence is ELTPILPFLF…LLEFEEDLNN (144 aa). Cysteine 408 functions as the Phosphocysteine intermediate in the catalytic mechanism.

The protein belongs to the protein-tyrosine phosphatase family. Non-receptor class dual specificity subfamily. Monomer. Interacts with MAPK14. Expressed in keratinocytes (at protein level). Detected in brain.

It localises to the cytoplasm. The protein localises to the nucleus. The enzyme catalyses O-phospho-L-tyrosyl-[protein] + H2O = L-tyrosyl-[protein] + phosphate. It catalyses the reaction O-phospho-L-seryl-[protein] + H2O = L-seryl-[protein] + phosphate. The catalysed reaction is O-phospho-L-threonyl-[protein] + H2O = L-threonyl-[protein] + phosphate. In terms of biological role, protein phosphatase involved in the inactivation of MAP kinases. Has a specificity for the MAPK11/MAPK12/MAPK13/MAPK14 subfamily. It preferably dephosphorylates p38. In Homo sapiens (Human), this protein is Dual specificity protein phosphatase 10 (DUSP10).